The chain runs to 1111 residues: Kinesin-like protein KIP1 (1111 aa).

Positions 1-11 (MARSSLPNRRT) are enriched in polar residues. The disordered stretch occupies residues 1 to 34 (MARSSLPNRRTAQFEANKRRTIAHAPSPSLSNGM). The Kinesin motor domain maps to 52–410 (NIHVYVRCRS…LEYATRAKSI (359 aa)). 141-148 (GQTGTGKT) lines the ATP pocket. Coiled-coil stretches lie at residues 424-510 (TCLK…IIQN), 648-670 (KDLN…DIKS), 710-780 (KLIK…DQDI), and 808-828 (HNAE…TNDL). The span at 1007-1016 (AENKSKDDTS) shows a compositional bias: basic and acidic residues. A disordered region spans residues 1007-1111 (AENKSKDDTS…DILQNKKLHQ (105 aa)). Composition is skewed to polar residues over residues 1017–1038 (NSRT…QFSP) and 1057–1082 (SINS…SQNN).

This sequence belongs to the TRAFAC class myosin-kinesin ATPase superfamily. Kinesin family. BimC subfamily. In terms of assembly, might be dimeric.

It is found in the cytoplasm. The protein localises to the cytoskeleton. It localises to the spindle. In terms of biological role, required for assembly of the mitotic spindle. Interacts with spindle microtubules to produce an outwardly directed force acting upon the poles. Following spindle assembly, CIN8 and KIP1 apparently act to oppose a force that draws separated poles back together. This force seems to be mediate by KAR3. In Saccharomyces cerevisiae (strain ATCC 204508 / S288c) (Baker's yeast), this protein is Kinesin-like protein KIP1 (KIP1).